Here is a 1058-residue protein sequence, read N- to C-terminus: Ubiquitin-like modifier-activating enzyme 1 (1058 aa).

The segment at 1–47 (MSSSPLSKKRRVSGPDPKPGSNCSPAQSVLPQVPSAPTNGMAKNGSE) is disordered. Ser2 bears the N-acetylserine mark. 5 positions are modified to phosphoserine: Ser4, Ser13, Ser21, Ser24, and Ser46. Polar residues predominate over residues 21–38 (SNCSPAQSVLPQVPSAPT). The residue at position 55 (Tyr55) is a Phosphotyrosine. 2 repeat units span residues 63–199 (GHEA…GQLF) and 459–611 (GSDL…QVVI). The 2 approximate repeats stretch occupies residues 63–611 (GHEAMKRLQT…GTKGNVQVVI (549 aa)). ATP contacts are provided by residues Ala478, Asp504, Arg515, Lys528, and 576–577 (DN). N6-succinyllysine is present on Lys528. Cys632 serves as the catalytic Glycyl thioester intermediate. Lys671 is subject to N6-acetyllysine. A Phosphothreonine modification is found at Thr800. Ser810, Ser816, Ser820, and Ser835 each carry phosphoserine. An N6-acetyllysine modification is found at Lys980.

Belongs to the ubiquitin-activating E1 family. In terms of assembly, monomer. As to expression, ubiquitous.

The protein localises to the cytoplasm. The protein resides in the mitochondrion. It localises to the nucleus. It catalyses the reaction ATP + ubiquitin + [E1 ubiquitin-activating enzyme]-L-cysteine = AMP + diphosphate + S-ubiquitinyl-[E1 ubiquitin-activating enzyme]-L-cysteine.. Its pathway is protein modification; protein ubiquitination. In terms of biological role, catalyzes the first step in ubiquitin conjugation to mark cellular proteins for degradation through the ubiquitin-proteasome system. Activates ubiquitin by first adenylating its C-terminal glycine residue with ATP, and thereafter linking this residue to the side chain of a cysteine residue in E1, yielding a ubiquitin-E1 thioester and free AMP. Essential for the formation of radiation-induced foci, timely DNA repair and for response to replication stress. Promotes the recruitment of TP53BP1 and BRCA1 at DNA damage sites. The chain is Ubiquitin-like modifier-activating enzyme 1 (UBA1) from Oryctolagus cuniculus (Rabbit).